A 131-amino-acid chain; its full sequence is Small ribosomal subunit protein uS11 (131 aa).

A compositionally biased stretch (basic residues) spans 1–15; it reads MAAKTVKKTRRRKER. A disordered region spans residues 1 to 23; it reads MAAKTVKKTRRRKERKNVEHGAA.

The protein belongs to the universal ribosomal protein uS11 family. Part of the 30S ribosomal subunit. Interacts with proteins S7 and S18. Binds to IF-3.

In terms of biological role, located on the platform of the 30S subunit, it bridges several disparate RNA helices of the 16S rRNA. Forms part of the Shine-Dalgarno cleft in the 70S ribosome. This chain is Small ribosomal subunit protein uS11, found in Clostridium beijerinckii (strain ATCC 51743 / NCIMB 8052) (Clostridium acetobutylicum).